Reading from the N-terminus, the 458-residue chain is Brassinosteroid-related acyltransferase 1 (458 aa).

Histidine 164 acts as the Proton acceptor in catalysis.

Belongs to the plant acyltransferase family. In terms of tissue distribution, highly expressed in young tissues and vascular bundles. Mostly expressed in young leaves, primary roots, flowers (including petals and sepals), and siliques.

It localises to the endoplasmic reticulum. The protein resides in the nucleus. It functions in the pathway plant hormone biosynthesis; brassinosteroid biosynthesis. Functionally, brassinosteroids (BR) acyltransferase with acyl-CoA ligase activity toward brassinolide (BL), castasterone (CS), typhasterol (TY), 6-deoxotyphasterol (6-deoxoTY), and 6-deoxocastasterone (6-deoxoCS) and thus converts them to corresponding lauroyl esters. Regulates BR homeostasis and promotes BR-mediated cell growth regulation. Involved in vascular bundle development. This is Brassinosteroid-related acyltransferase 1 from Arabidopsis thaliana (Mouse-ear cress).